A 229-amino-acid chain; its full sequence is ACD11 homolog protein (229 aa).

Positions 84, 88, 123, 127, and 166 each coordinate an N-acylsphingoid base 1-phosphate.

This sequence belongs to the GLTP family.

The chain is ACD11 homolog protein from Arabidopsis thaliana (Mouse-ear cress).